A 218-amino-acid chain; its full sequence is MHRSPLAWLRLLLAAVLGAFLLGGPLHAAETAATRSPAWAQAVDPSINLYRMSPTLYRSALPNAQSVALLQRLQVKTVVSFIKDDDRAWLGQAPVRVLSLPTHADRVDDAEVLSVLRQLQAAEREGPVLMHCKHGNNRTGLFAAMYRIVVQGWDKQAALEEMQHGGFGDEDDMRDASAYVRGADVDGLRLAMANGECSPSRFAVCHVREWMAQALDRP.

Positions 1 to 28 (MHRSPLAWLRLLLAAVLGAFLLGGPLHA) are cleaved as a signal peptide. One can recognise a Tyrosine-protein phosphatase domain in the interval 44–188 (DPSINLYRMS…YVRGADVDGL (145 aa)). D105 functions as the Proton donor/acceptor in the catalytic mechanism. The active-site Phosphocysteine intermediate is C132.

The protein belongs to the protein-tyrosine phosphatase family.

It is found in the periplasm. The catalysed reaction is O-phospho-L-tyrosyl-[protein] + H2O = L-tyrosyl-[protein] + phosphate. It catalyses the reaction O-phospho-L-threonyl-[protein] + H2O = L-threonyl-[protein] + phosphate. The enzyme catalyses O-phospho-L-seryl-[protein] + H2O = L-seryl-[protein] + phosphate. Its function is as follows. Phosphatase that regulates diverse phenotypes in P.aeruginosa via regulation of the concentration of cellular c-di-GMP. Acts by dephosphorylating the membrane-anchored diguanylate cyclase TpbB at tyrosine and serine/threonine sites, leading to inactivation of TpbB and reduced c-di-GMP production. In vitro shows phosphatase activity toward p-nitrophenyl phosphate (pNPP) and tyrosine phosphopeptides. Can efficiently dephosphorylate two phosphorylated peptides derived from the periplasmic domain of TpbB, with a strong preference for Tyr-48 over Tyr-62. The chain is Dual specificity protein phosphatase TpbA from Pseudomonas aeruginosa (strain ATCC 15692 / DSM 22644 / CIP 104116 / JCM 14847 / LMG 12228 / 1C / PRS 101 / PAO1).